The sequence spans 565 residues: Thiol:disulfide interchange protein DsbD (565 aa).

Residues 1–19 (MAQRIFTLILLLCSTSVFA) form the signal peptide. 2 disulfide bridges follow: C122–C128 and C182–C304. The next 7 helical transmembrane spans lie at 163–183 (LPFS…TPCV), 208–228 (LLTF…GLVV), 243–263 (YVLI…FGLF), 289–309 (GVFI…TAPL), 323–343 (WLGG…LMLI), 357–377 (WMEQ…VFLL), and 384–404 (IWGL…AFIT). The Thioredoxin domain occupies 434–565 (WAFGATHTAQ…FSAHLRDRQP (132 aa)). C480 and C483 are disulfide-bonded.

The protein belongs to the thioredoxin family. DsbD subfamily.

Its subcellular location is the cell inner membrane. The catalysed reaction is [protein]-dithiol + NAD(+) = [protein]-disulfide + NADH + H(+). The enzyme catalyses [protein]-dithiol + NADP(+) = [protein]-disulfide + NADPH + H(+). In terms of biological role, required to facilitate the formation of correct disulfide bonds in some periplasmic proteins and for the assembly of the periplasmic c-type cytochromes. Acts by transferring electrons from cytoplasmic thioredoxin to the periplasm. This transfer involves a cascade of disulfide bond formation and reduction steps. The protein is Thiol:disulfide interchange protein DsbD of Escherichia coli O6:H1 (strain CFT073 / ATCC 700928 / UPEC).